A 336-amino-acid chain; its full sequence is Ribosomal RNA large subunit methyltransferase F (336 aa).

It belongs to the methyltransferase superfamily. METTL16/RlmF family.

The protein localises to the cytoplasm. It catalyses the reaction adenosine(1618) in 23S rRNA + S-adenosyl-L-methionine = N(6)-methyladenosine(1618) in 23S rRNA + S-adenosyl-L-homocysteine + H(+). Specifically methylates the adenine in position 1618 of 23S rRNA. This Yersinia pestis bv. Antiqua (strain Angola) protein is Ribosomal RNA large subunit methyltransferase F.